The chain runs to 198 residues: Holliday junction branch migration complex subunit RuvA (198 aa).

The tract at residues 1-61 (MTLYKIGEIV…DYIQQTYGFK (61 aa)) is domain I. The interval 62-139 (TFKERLLFTD…KIIQNKEVKK (78 aa)) is domain II. Residues 140–144 (FDDIT) form a flexible linker region. The segment at 144 to 198 (TNIKELKQTLNKLGFKASDIDYAVNNISSTKELDLMVEESINLITTQMHANNQTT) is domain III.

This sequence belongs to the RuvA family. As to quaternary structure, homotetramer. Forms an RuvA(8)-RuvB(12)-Holliday junction (HJ) complex. HJ DNA is sandwiched between 2 RuvA tetramers; dsDNA enters through RuvA and exits via RuvB. An RuvB hexamer assembles on each DNA strand where it exits the tetramer. Each RuvB hexamer is contacted by two RuvA subunits (via domain III) on 2 adjacent RuvB subunits; this complex drives branch migration. In the full resolvosome a probable DNA-RuvA(4)-RuvB(12)-RuvC(2) complex forms which resolves the HJ.

It is found in the cytoplasm. The RuvA-RuvB-RuvC complex processes Holliday junction (HJ) DNA during genetic recombination and DNA repair, while the RuvA-RuvB complex plays an important role in the rescue of blocked DNA replication forks via replication fork reversal (RFR). RuvA specifically binds to HJ cruciform DNA, conferring on it an open structure. The RuvB hexamer acts as an ATP-dependent pump, pulling dsDNA into and through the RuvAB complex. HJ branch migration allows RuvC to scan DNA until it finds its consensus sequence, where it cleaves and resolves the cruciform DNA. This chain is Holliday junction branch migration complex subunit RuvA, found in Mycoplasmopsis synoviae (strain 53) (Mycoplasma synoviae).